Here is a 101-residue protein sequence, read N- to C-terminus: Doublesex- and mab-3-related transcription factor 1 (101 aa).

The segment at residues 1 to 13 (SLIAERQRVMAAQ) is a DNA-binding region (DM). Low complexity predominate over residues 52 to 75 (CLLLESSSPTHSTSTVTTVSTSPS). The tract at residues 52–79 (CLLLESSSPTHSTSTVTTVSTSPSEGRM) is disordered.

It belongs to the DMRT family.

It is found in the nucleus. Its function is as follows. May be required for testis development. This chain is Doublesex- and mab-3-related transcription factor 1 (DMRT1), found in Alligator mississippiensis (American alligator).